Reading from the N-terminus, the 164-residue chain is uncharacterized protein (164 aa).

Residues 46-142 (GRSPEQKEHV…APDNSIYDTL (97 aa)) are disordered.

This is an uncharacterized protein from Caenorhabditis elegans.